A 319-amino-acid chain; its full sequence is Acetyl-coenzyme A carboxylase carboxyl transferase subunit alpha (319 aa).

One can recognise a CoA carboxyltransferase C-terminal domain in the interval 35-296; it reads NIDEEVHRLR…KAQLLEDLAD (262 aa).

This sequence belongs to the AccA family. Acetyl-CoA carboxylase is a heterohexamer composed of biotin carboxyl carrier protein (AccB), biotin carboxylase (AccC) and two subunits each of ACCase subunit alpha (AccA) and ACCase subunit beta (AccD).

Its subcellular location is the cytoplasm. It catalyses the reaction N(6)-carboxybiotinyl-L-lysyl-[protein] + acetyl-CoA = N(6)-biotinyl-L-lysyl-[protein] + malonyl-CoA. It participates in lipid metabolism; malonyl-CoA biosynthesis; malonyl-CoA from acetyl-CoA: step 1/1. In terms of biological role, component of the acetyl coenzyme A carboxylase (ACC) complex. First, biotin carboxylase catalyzes the carboxylation of biotin on its carrier protein (BCCP) and then the CO(2) group is transferred by the carboxyltransferase to acetyl-CoA to form malonyl-CoA. The chain is Acetyl-coenzyme A carboxylase carboxyl transferase subunit alpha from Salmonella paratyphi C (strain RKS4594).